We begin with the raw amino-acid sequence, 261 residues long: Pyridoxine-5'-phosphate oxidase (261 aa).

42–45 serves as a coordination point for pyridoxal 5'-phosphate; that stretch reads RGDP. 95 to 98 is an FMN binding site; it reads RMVL. Lys100 is a pyridoxal 5'-phosphate binding site. FMN-binding positions include 110–111, 116–117, and Gln139; these read FT and RK. Residues Tyr157, Arg161, and Ser165 each contribute to the pyridoxal 5'-phosphate site. Residues 174–175 and Trp219 contribute to the FMN site; that span reads QS. 225-227 serves as a coordination point for pyridoxal 5'-phosphate; that stretch reads RLH. An FMN-binding site is contributed by Arg229. A Phosphothreonine modification is found at Thr238. Ser241 carries the post-translational modification Phosphoserine.

Belongs to the pyridoxamine 5'-phosphate oxidase family. In terms of assembly, homodimer. The cofactor is FMN.

It carries out the reaction pyridoxamine 5'-phosphate + O2 + H2O = pyridoxal 5'-phosphate + H2O2 + NH4(+). The catalysed reaction is pyridoxine 5'-phosphate + O2 = pyridoxal 5'-phosphate + H2O2. Its pathway is cofactor metabolism; pyridoxal 5'-phosphate salvage; pyridoxal 5'-phosphate from pyridoxamine 5'-phosphate: step 1/1. It participates in cofactor metabolism; pyridoxal 5'-phosphate salvage; pyridoxal 5'-phosphate from pyridoxine 5'-phosphate: step 1/1. Catalyzes the oxidation of either pyridoxine 5'-phosphate (PNP) or pyridoxamine 5'-phosphate (PMP) into pyridoxal 5'-phosphate (PLP). In Bos taurus (Bovine), this protein is Pyridoxine-5'-phosphate oxidase (PNPO).